The primary structure comprises 174 residues: UPF0398 protein llmg_0513 (174 aa).

The protein belongs to the UPF0398 family.

This is UPF0398 protein llmg_0513 from Lactococcus lactis subsp. cremoris (strain MG1363).